A 316-amino-acid polypeptide reads, in one-letter code: Ribosomal RNA small subunit methyltransferase H (316 aa).

S-adenosyl-L-methionine is bound by residues 35-37 (AGH), Asp55, Phe84, Asp105, and Gln112.

Belongs to the methyltransferase superfamily. RsmH family.

It localises to the cytoplasm. It carries out the reaction cytidine(1402) in 16S rRNA + S-adenosyl-L-methionine = N(4)-methylcytidine(1402) in 16S rRNA + S-adenosyl-L-homocysteine + H(+). Functionally, specifically methylates the N4 position of cytidine in position 1402 (C1402) of 16S rRNA. In Streptococcus thermophilus (strain CNRZ 1066), this protein is Ribosomal RNA small subunit methyltransferase H.